Consider the following 776-residue polypeptide: 5-methyltetrahydropteroyltriglutamate--homocysteine methyltransferase (776 aa).

Residues 16–19 and Lys-112 contribute to the 5-methyltetrahydropteroyltri-L-glutamate site; that span reads RELK. Residues 435–437 and Glu-488 contribute to the L-homocysteine site; that span reads IGS. Residues 435–437 and Glu-488 each bind L-methionine; that span reads IGS. Residues 519–520 and Trp-565 each bind 5-methyltetrahydropteroyltri-L-glutamate; that span reads RC. Asp-603 serves as a coordination point for L-homocysteine. Asp-603 contributes to the L-methionine binding site. Glu-609 contributes to the 5-methyltetrahydropteroyltri-L-glutamate binding site. Zn(2+) contacts are provided by His-645, Cys-647, and Glu-669. His-698 (proton donor) is an active-site residue. Cys-730 is a binding site for Zn(2+).

Belongs to the vitamin-B12 independent methionine synthase family. The cofactor is Zn(2+).

It carries out the reaction 5-methyltetrahydropteroyltri-L-glutamate + L-homocysteine = tetrahydropteroyltri-L-glutamate + L-methionine. It participates in amino-acid biosynthesis; L-methionine biosynthesis via de novo pathway; L-methionine from L-homocysteine (MetE route): step 1/1. Catalyzes the transfer of a methyl group from 5-methyltetrahydrofolate to homocysteine resulting in methionine formation. In Ralstonia pickettii (strain 12J), this protein is 5-methyltetrahydropteroyltriglutamate--homocysteine methyltransferase.